Consider the following 1243-residue polypeptide: Multifunctional 2-oxoglutarate metabolism enzyme (1243 aa).

A 2-oxoglutarate dehydrogenase E1, N-terminal part region spans residues 1 to 40; that stretch reads MNSPSPFGQNEWLVEEMYRKFREDPSSVDPSWHEFLVDYS. Residues 22 to 36 are compositionally biased toward basic and acidic residues; it reads REDPSSVDPSWHEFL. Residues 22 to 118 form a disordered region; that stretch reads REDPSSVDPS…AAPAGVSDDD (97 aa). The linker stretch occupies residues 41-103; it reads PEPTNDAPAG…KKPEEKTSPA (63 aa). The span at 47-58 shows a compositional bias: low complexity; it reads APAGNGKPAAAP. Residues 59 to 71 show a composition bias toward pro residues; the sequence is TAPPEPASAPAPK. Over residues 91–100 the composition is skewed to basic and acidic residues; it reads APEKKPEEKT. Residues 101–112 show a composition bias toward low complexity; that stretch reads SPAPKAKTAAPA. The segment at 104–353 is succinyltransferase E2; sequence PKAKTAAPAG…LRTIHTLLLD (250 aa). The active-site Proton acceptor; for succinyltransferase activity is His332. The tract at residues 354 to 1243 is 2-oxoglutarate dehydrogenase E1, C-terminal part; the sequence is DEFYDEIFRE…QQEIIDEAFG (890 aa). Arg558 provides a ligand contact to thiamine diphosphate. 2 residues coordinate 2-oxoglutarate: His597 and Ser622. Residues Ser622, Leu624, Asp661, Ala662, Ala663, and Asn694 each contribute to the thiamine diphosphate site. Residue Asp661 participates in Mg(2+) binding. Asn694 and Ile696 together coordinate Mg(2+). The stretch at 799–831 forms a coiled coil; the sequence is DISMKEAEDALRDYQGQLERVFNEVRELEKHAI. Residue His1036 participates in 2-oxoglutarate binding. Residues Thr1054, Arg1070, Lys1105, Ser1108, Gln1158, Arg1165, and Arg1166 each coordinate acetyl-CoA.

It belongs to the 2-oxoacid dehydrogenase family. Kgd subfamily. In terms of assembly, homodimer. The 2-oxoglutarate dehydrogenase (ODH) complex contains multiple copies of three enzymatic components: 2-oxoglutarate dehydrogenase (E1), dihydrolipoamide succinyltransferase (E2) and lipoamide dehydrogenase (E3). Requires Mg(2+) as cofactor. Thiamine diphosphate serves as cofactor.

The enzyme catalyses glyoxylate + 2-oxoglutarate + H(+) = 2-hydroxy-3-oxoadipate + CO2. The catalysed reaction is 2-oxoglutarate + H(+) = succinate semialdehyde + CO2. It catalyses the reaction N(6)-[(R)-lipoyl]-L-lysyl-[protein] + 2-oxoglutarate + H(+) = N(6)-[(R)-S(8)-succinyldihydrolipoyl]-L-lysyl-[protein] + CO2. It carries out the reaction N(6)-[(R)-dihydrolipoyl]-L-lysyl-[protein] + succinyl-CoA = N(6)-[(R)-S(8)-succinyldihydrolipoyl]-L-lysyl-[protein] + CoA. Its pathway is carbohydrate metabolism; tricarboxylic acid cycle; succinate from 2-oxoglutarate (transferase route): step 1/2. It functions in the pathway carbohydrate metabolism; tricarboxylic acid cycle; succinyl-CoA from 2-oxoglutarate (dehydrogenase route): step 1/1. Alpha-ketoglutarate dehydrogenase and decarboxylase activities are inhibited by unphosphorylated GarA, and allosterically activated by acetyl-CoA, the main substrate of the TCA cycle. Functionally, shows three enzymatic activities that share a first common step, the attack of thiamine-PP on 2-oxoglutarate (alpha-ketoglutarate, KG), leading to the formation of an enamine-thiamine-PP intermediate upon decarboxylation. Thus, displays KGD activity, catalyzing the decarboxylation from five-carbon 2-oxoglutarate to four-carbon succinate semialdehyde (SSA). Also catalyzes C-C bond formation between the activated aldehyde formed after decarboxylation of alpha-ketoglutarate and the carbonyl of glyoxylate (GLX), to yield 2-hydroxy-3-oxoadipate (HOA), which spontaneously decarboxylates to form 5-hydroxylevulinate (HLA). And is also a component of the 2-oxoglutarate dehydrogenase (ODH) complex, that catalyzes the overall conversion of 2-oxoglutarate to succinyl-CoA and CO(2). The KG decarboxylase and KG dehydrogenase reactions provide two alternative, tightly regulated, pathways connecting the oxidative and reductive branches of the TCA cycle. The polypeptide is Multifunctional 2-oxoglutarate metabolism enzyme (kgd) (Mycolicibacterium vanbaalenii (strain DSM 7251 / JCM 13017 / BCRC 16820 / KCTC 9966 / NRRL B-24157 / PYR-1) (Mycobacterium vanbaalenii)).